Consider the following 293-residue polypeptide: Diaminopimelate epimerase (293 aa).

Substrate-binding residues include asparagine 11 and asparagine 78. The active-site Proton donor is cysteine 87. Substrate-binding positions include 88-89, asparagine 166, asparagine 202, and 220-221; these read GN and ER. The Proton acceptor role is filled by cysteine 229. A substrate-binding site is contributed by 230-231; it reads GT.

This sequence belongs to the diaminopimelate epimerase family. Homodimer.

Its subcellular location is the cytoplasm. It carries out the reaction (2S,6S)-2,6-diaminopimelate = meso-2,6-diaminopimelate. The protein operates within amino-acid biosynthesis; L-lysine biosynthesis via DAP pathway; DL-2,6-diaminopimelate from LL-2,6-diaminopimelate: step 1/1. Catalyzes the stereoinversion of LL-2,6-diaminopimelate (L,L-DAP) to meso-diaminopimelate (meso-DAP), a precursor of L-lysine and an essential component of the bacterial peptidoglycan. The protein is Diaminopimelate epimerase of Mycobacterium sp. (strain JLS).